We begin with the raw amino-acid sequence, 122 residues long: Large ribosomal subunit protein uL14 (122 aa).

The protein belongs to the universal ribosomal protein uL14 family. Part of the 50S ribosomal subunit. Forms a cluster with proteins L3 and L19. In the 70S ribosome, L14 and L19 interact and together make contacts with the 16S rRNA in bridges B5 and B8.

Functionally, binds to 23S rRNA. Forms part of two intersubunit bridges in the 70S ribosome. The sequence is that of Large ribosomal subunit protein uL14 from Campylobacter fetus subsp. fetus (strain 82-40).